Reading from the N-terminus, the 793-residue chain is E3 ubiquitin-protein ligase UHRF1 (793 aa).

The Ubiquitin-like domain maps to 1 to 78 (MWIQVRTMDG…IQLLVRQSLV (78 aa)). A phosphoserine mark is found at serine 76, serine 91, serine 95, and serine 165. Residues 82-124 (STKERDSELSDTDSGCCLGQSESDKSSTHGEAAAETDSRPADE) are disordered. 2 tudor-like regions span residues 133–209 (GLYK…ARAR) and 216–283 (DLEV…IERP). A Glycyl lysine isopeptide (Lys-Gly) (interchain with G-Cter in SUMO2) cross-link involves residue lysine 279. At serine 287 the chain carries Phosphoserine. The linker stretch occupies residues 296–301 (RKSGPS). The residue at position 298 (serine 298) is a Phosphoserine; by PKA. The PHD-type zinc-finger motif lies at 310 to 366 (NRLCRVCACHLCGGRQDPDKQLMCDECDMAFHIYCLDPPLSSVPSEDEWYCPECRND). Histone H3R2me0 binding regions lie at residues 333–337 (CDECD) and 353–355 (PSE). The residue at position 368 (serine 368) is a Phosphoserine. A Glycyl lysine isopeptide (Lys-Gly) (interchain with G-Cter in SUMO2) cross-link involves residue lysine 385. Residue lysine 399 is modified to N6-acetyllysine. The region spanning 419–582 (GPIPGIPVGT…FLVWRYLLRR (164 aa)) is the YDG domain. Positions 445–446 (HV) are required to promote base flipping. DNA contacts are provided by residues 463-464 (AG) and aspartate 469. Required for formation of a 5-methylcytosine-binding pocket regions lie at residues 466–469 (YEDD) and 478–481 (YTGS). Residue lysine 546 is modified to N6-acetyllysine; alternate. Lysine 546 is covalently cross-linked (Glycyl lysine isopeptide (Lys-Gly) (interchain with G-Cter in SUMO2); alternate). Over residues 618–629 (REREKENSKREE) the composition is skewed to basic and acidic residues. The disordered stretch occupies residues 618–673 (REREKENSKREEEEQQEGGFASPRTGKGKWKRKSAGGGPSRAGSPRRTSKKTKVEP). At serine 639 the chain carries Phosphoserine; by CDK1. Position 651 is a phosphoserine (serine 651). A Glycyl lysine isopeptide (Lys-Gly) (interchain with G-Cter in SUMO2) cross-link involves residue lysine 670. Phosphoserine occurs at positions 707 and 709. The RING-type zinc-finger motif lies at 724–763 (CICCQELVFRPITTVCQHNVCKDCLDRSFRAQVFSCPACR).

In terms of assembly, interacts with DNMT3A and DNMT3B. Interacts with DNMT1; the interaction is direct. Interacts with USP7; leading to its deubiquitination. Interacts with histone H3. Interacts with HDAC1, but not with HDAC2. Interacts with BLTP3A. Interacts with PML. Interacts with EHMT2. Binds hemimethylated CpG containing oligonucleotides. Interacts with ZNF263; recruited to the SIX3 promoter along with other proteins involved in chromatin modification and transcriptional corepression where it contributes to transcriptional repression. Interacts with UHRF2. Interacts with FANCD2. Interacts with TET1 isoform 2; this interaction induces the recruitment of TET1 isoform 2 to replicating heterochromatin. In terms of processing, phosphorylation at Ser-298 of the linker region decreases the binding to H3K9me3. Phosphorylation at Ser-639 by CDK1 during M phase impairs interaction with USP7, preventing deubiquitination and leading to degradation by the proteasome. Post-translationally, ubiquitinated; which leads to proteasomal degradation. Autoubiquitinated; interaction with USP7 leads to deubiquitination and prevents degradation. Ubiquitination and degradation takes place during M phase, when phosphorylation at Ser-639 prevents interaction with USP7 and subsequent deubiquitination. Polyubiquitination may be stimulated by DNA damage. As to expression, expressed in thymus, bone marrow, testis, lung and heart. Overexpressed in breast cancer.

It localises to the nucleus. The catalysed reaction is S-ubiquitinyl-[E2 ubiquitin-conjugating enzyme]-L-cysteine + [acceptor protein]-L-lysine = [E2 ubiquitin-conjugating enzyme]-L-cysteine + N(6)-ubiquitinyl-[acceptor protein]-L-lysine.. Its pathway is protein modification; protein ubiquitination. Its function is as follows. Multidomain protein that acts as a key epigenetic regulator by bridging DNA methylation and chromatin modification. Specifically recognizes and binds hemimethylated DNA at replication forks via its YDG domain and recruits DNMT1 methyltransferase to ensure faithful propagation of the DNA methylation patterns through DNA replication. In addition to its role in maintenance of DNA methylation, also plays a key role in chromatin modification: through its tudor-like regions and PHD-type zinc fingers, specifically recognizes and binds histone H3 trimethylated at 'Lys-9' (H3K9me3) and unmethylated at 'Arg-2' (H3R2me0), respectively, and recruits chromatin proteins. Enriched in pericentric heterochromatin where it recruits different chromatin modifiers required for this chromatin replication. Also localizes to euchromatic regions where it negatively regulates transcription possibly by impacting DNA methylation and histone modifications. Has E3 ubiquitin-protein ligase activity by mediating the ubiquitination of target proteins such as histone H3 and PML. It is still unclear how E3 ubiquitin-protein ligase activity is related to its role in chromatin in vivo. Plays a role in DNA repair by cooperating with UHRF2 to ensure recruitment of FANCD2 to interstrand cross-links (ICLs) leading to FANCD2 activation. Acts as a critical player of proper spindle architecture by catalyzing the 'Lys-63'-linked ubiquitination of KIF11, thereby controlling KIF11 localization on the spindle. The polypeptide is E3 ubiquitin-protein ligase UHRF1 (UHRF1) (Homo sapiens (Human)).